The primary structure comprises 311 residues: Inositol oxygenase 1 (311 aa).

Over residues 1 to 11 the composition is skewed to basic and acidic residues; the sequence is MTILIDRHSDQ. The tract at residues 1–29 is disordered; sequence MTILIDRHSDQNDAGDEIVEKNQGNGKEE. Residues R52 and 109-111 contribute to the substrate site; that span reads DES. Positions 122, 147, and 148 each coordinate Fe cation. Residues K151 and 168–169 each bind substrate; that span reads GD. Residues H220, H246, and D279 each contribute to the Fe cation site. Residue 246-247 coordinates substrate; that stretch reads HS.

The protein belongs to the myo-inositol oxygenase family. Fe cation is required as a cofactor. As to expression, expressed in roots, young leaves, stems, flowers and siliques.

Its subcellular location is the cytoplasm. The enzyme catalyses myo-inositol + O2 = D-glucuronate + H2O + H(+). Its pathway is polyol metabolism; myo-inositol degradation into D-glucuronate; D-glucuronate from myo-inositol: step 1/1. In terms of biological role, catalyzes the oxygenative cleavage of myo-inositol to D-glucuronate. Involved in the biosynthesis of UDP-glucuronic acid (UDP-GlcA), providing nucleotide sugars for cell-wall polymers. May be also involved in plant ascorbate biosynthesis. This Arabidopsis thaliana (Mouse-ear cress) protein is Inositol oxygenase 1 (MIOX1).